The sequence spans 187 residues: Casparian strip membrane protein 1 (187 aa).

The span at 1-10 (MKGSSEHGET) shows a compositional bias: basic and acidic residues. The tract at residues 1 to 20 (MKGSSEHGETSKQAPLGSSR) is disordered. Topologically, residues 1-27 (MKGSSEHGETSKQAPLGSSRGVSKGVS) are cytoplasmic. Residues 28–48 (VLDLILRFIAIIGTLASAIAM) form a helical membrane-spanning segment. The Extracellular portion of the chain corresponds to 49–75 (GTTNETLPFFTQFIRFKAQYSDLPTLT). Asparagine 52 carries an N-linked (GlcNAc...) asparagine glycan. The chain crosses the membrane as a helical span at residues 76–96 (FFVVANSIVCAYLTLSLPLSI). Topologically, residues 97–115 (VHIIRSRAKYSRLLLVVLD) are cytoplasmic. A helical transmembrane segment spans residues 116–136 (AAMLALVTPGASAAAAIVYLA). At 137 to 162 (HKGNVRANWLAICQQFDSFCERISGC) the chain is on the extracellular side. A helical membrane pass occupies residues 163–183 (LIGSFGAMVMLVLLLLLSAIA). Residues 184–187 (LARR) lie on the Cytoplasmic side of the membrane.

This sequence belongs to the Casparian strip membrane proteins (CASP) family. In terms of assembly, homodimer and heterodimers.

The protein resides in the cell membrane. In terms of biological role, regulates membrane-cell wall junctions and localized cell wall deposition. Required for establishment of the Casparian strip membrane domain (CSD) and the subsequent formation of Casparian strips, a cell wall modification of the root endodermis that determines an apoplastic barrier between the intraorganismal apoplasm and the extraorganismal apoplasm and prevents lateral diffusion. In Zea mays (Maize), this protein is Casparian strip membrane protein 1.